The chain runs to 185 residues: MEEAKVEAKDGTISVASAFSGHQQAVHDSDHKFLTQAVEEAYKGVDCGDGGPFGAVIVHNNEVVASCHNMVLKYTDPTAHAEVTAIREACKKLNKIELSECEIYASCEPCPMCFGAIHLSRLKRLVYGAKAEAAIAIGFDDFIADALRGTGVYQKSSLEIKKADGNGAAIAEQVFQNTKEKFRLY.

In terms of domain architecture, CMP/dCMP-type deaminase spans 28-142 (DSDHKFLTQA…AAIAIGFDDF (115 aa)). H80 contributes to the Zn(2+) binding site. The Proton donor role is filled by E82. Zn(2+)-binding residues include C110 and C113.

Belongs to the cytidine and deoxycytidylate deaminase family. As to expression, expressed in roots, leaves, flowers and siliques.

Its subcellular location is the cytoplasm. It localises to the nucleus. It catalyses the reaction guanosine + H2O + H(+) = xanthosine + NH4(+). Catalyzes the hydrolytic deamination of guanosine, producing xanthosine and ammonia. Deaminates exclusively guanosine and 2'-deoxyguanosine but no other aminated purines, pyrimidines, or pterines. Deamination of guanosine by GSDA is the only source of xanthosine production in Arabidopsis. This chain is Guanosine deaminase, found in Arabidopsis thaliana (Mouse-ear cress).